The following is a 234-amino-acid chain: Leucyl/phenylalanyl-tRNA--protein transferase (234 aa).

Belongs to the L/F-transferase family.

The protein resides in the cytoplasm. The enzyme catalyses N-terminal L-lysyl-[protein] + L-leucyl-tRNA(Leu) = N-terminal L-leucyl-L-lysyl-[protein] + tRNA(Leu) + H(+). It carries out the reaction N-terminal L-arginyl-[protein] + L-leucyl-tRNA(Leu) = N-terminal L-leucyl-L-arginyl-[protein] + tRNA(Leu) + H(+). It catalyses the reaction L-phenylalanyl-tRNA(Phe) + an N-terminal L-alpha-aminoacyl-[protein] = an N-terminal L-phenylalanyl-L-alpha-aminoacyl-[protein] + tRNA(Phe). Its function is as follows. Functions in the N-end rule pathway of protein degradation where it conjugates Leu, Phe and, less efficiently, Met from aminoacyl-tRNAs to the N-termini of proteins containing an N-terminal arginine or lysine. The polypeptide is Leucyl/phenylalanyl-tRNA--protein transferase (Enterobacter sp. (strain 638)).